A 394-amino-acid polypeptide reads, in one-letter code: Flavohemoprotein (394 aa).

A Globin domain is found at 1 to 136 (MLSENTINIV…LANVFIQREE (136 aa)). Residue His85 participates in heme b binding. Catalysis depends on charge relay system residues Tyr95 and Glu135. Residues 147–394 (GGWRGLREFE…YECFGPHKVV (248 aa)) are reductase. One can recognise an FAD-binding FR-type domain in the interval 150–255 (RGLREFELVE…AAPAGDFFLD (106 aa)). FAD is bound by residues Tyr188 and 204–207 (RQYS). An NADP(+)-binding site is contributed by 268–273 (GVGLTP). 387 to 390 (CFGP) contacts FAD.

The protein belongs to the globin family. Two-domain flavohemoproteins subfamily. In the C-terminal section; belongs to the flavoprotein pyridine nucleotide cytochrome reductase family. Heme b serves as cofactor. It depends on FAD as a cofactor.

The enzyme catalyses 2 nitric oxide + NADPH + 2 O2 = 2 nitrate + NADP(+) + H(+). It catalyses the reaction 2 nitric oxide + NADH + 2 O2 = 2 nitrate + NAD(+) + H(+). Is involved in NO detoxification in an aerobic process, termed nitric oxide dioxygenase (NOD) reaction that utilizes O(2) and NAD(P)H to convert NO to nitrate, which protects the bacterium from various noxious nitrogen compounds. Therefore, plays a central role in the inducible response to nitrosative stress. The polypeptide is Flavohemoprotein (Vibrio vulnificus (strain YJ016)).